The chain runs to 327 residues: Ribose-phosphate pyrophosphokinase (327 aa).

Residues 40–42 (DGE) and 99–100 (RQ) each bind ATP. Residues histidine 134 and aspartate 173 each coordinate Mg(2+). The active site involves lysine 196. Residues arginine 198, aspartate 222, and 226–230 (DTANT) contribute to the D-ribose 5-phosphate site.

Belongs to the ribose-phosphate pyrophosphokinase family. Class I subfamily. As to quaternary structure, homohexamer. The cofactor is Mg(2+).

The protein localises to the cytoplasm. The enzyme catalyses D-ribose 5-phosphate + ATP = 5-phospho-alpha-D-ribose 1-diphosphate + AMP + H(+). It participates in metabolic intermediate biosynthesis; 5-phospho-alpha-D-ribose 1-diphosphate biosynthesis; 5-phospho-alpha-D-ribose 1-diphosphate from D-ribose 5-phosphate (route I): step 1/1. Its function is as follows. Involved in the biosynthesis of the central metabolite phospho-alpha-D-ribosyl-1-pyrophosphate (PRPP) via the transfer of pyrophosphoryl group from ATP to 1-hydroxyl of ribose-5-phosphate (Rib-5-P). The sequence is that of Ribose-phosphate pyrophosphokinase from Chromobacterium violaceum (strain ATCC 12472 / DSM 30191 / JCM 1249 / CCUG 213 / NBRC 12614 / NCIMB 9131 / NCTC 9757 / MK).